The primary structure comprises 172 residues: Orotate phosphoribosyltransferase (172 aa).

5-phospho-alpha-D-ribose 1-diphosphate is bound by residues Arg88, Lys89, Lys92, His94, and 113–121 (EDVTTSGGS). Residues Thr117 and Arg145 each contribute to the orotate site.

It belongs to the purine/pyrimidine phosphoribosyltransferase family. PyrE subfamily. In terms of assembly, homodimer. Mg(2+) serves as cofactor.

The enzyme catalyses orotidine 5'-phosphate + diphosphate = orotate + 5-phospho-alpha-D-ribose 1-diphosphate. Its pathway is pyrimidine metabolism; UMP biosynthesis via de novo pathway; UMP from orotate: step 1/2. Catalyzes the transfer of a ribosyl phosphate group from 5-phosphoribose 1-diphosphate to orotate, leading to the formation of orotidine monophosphate (OMP). The chain is Orotate phosphoribosyltransferase from Methanospirillum hungatei JF-1 (strain ATCC 27890 / DSM 864 / NBRC 100397 / JF-1).